The chain runs to 1026 residues: Multidrug resistance protein MdtC (1026 aa).

Helical transmembrane passes span 15-35, 333-353, 360-380, 387-407, 431-451, 463-483, 528-548, 853-873, 897-917, 953-973, and 984-1004; these read ILIAAAITLCGILGFRLLPVA, EVEETLAISVALVIMVVFLFL, LIPAVAVPVSLIGTFAAMYLC, LSLMALTIATGFVVDDAIVVL, VGFTVISMSLSLVAVFLPLLL, FAVTLSVAIGISLVVSLTLTP, LVGVVFLGTVALNIWLYIAIP, LILIVAAIATVYIVLGILYES, LFNAPFSLIALIGIMLLIGIV, PIMMTTLAALFGALPLVLSGG, and ITIVGGLVMSQLLTLYTTPVV.

It belongs to the resistance-nodulation-cell division (RND) (TC 2.A.6) family. MdtC subfamily. As to quaternary structure, part of a tripartite efflux system composed of MdtA, MdtB and MdtC. MdtC forms a heteromultimer with MdtB.

The protein resides in the cell inner membrane. In Salmonella paratyphi C (strain RKS4594), this protein is Multidrug resistance protein MdtC.